We begin with the raw amino-acid sequence, 59 residues long: Potassium channel toxin alpha-KTx 15.2 (59 aa).

Residues 1 to 22 (MKFSSIILLTLLICSMSKFGNC) form the signal peptide. Gln-23 is modified (pyrrolidone carboxylic acid). Cystine bridges form between Cys-30/Cys-50, Cys-35/Cys-55, and Cys-39/Cys-57.

Belongs to the short scorpion toxin superfamily. Potassium channel inhibitor family. Alpha-KTx 15 subfamily. As to expression, expressed by the venom gland.

Its subcellular location is the secreted. In terms of biological role, blocks both human ERG1/Kv11.1/KCNH2 potassium channels (in a reversible manner) and A-type voltage-gated potassium channels Kv4/KCND (in an irreversible manner). The presence of the Kv4-associated proteins DPP6 or DPP10 is mandatory to have high-affinity blockade of Kv4.2/KCND2 and Kv4.3/KCND3 channels. In contrast, the presence of the Kv4-associated protein KChIP1/KCNIP1 does not enhance the affinity blockade. May dispose of two functional faces (A and B); the two basic residues (Arg-40 and Lys-41) on the alpha-helix side of the peptide that blocks the hERG current (face A) and the typical dyad through which it blocks A-type currents on the beta-sheet side (face B). In adult rat brain, it binds to sites in the striatum, hippocampus, superior colliculus, and cerebellum. It shares the same target in rat brain than AaTX1 (AC Q867F4) and AmmTX3 (AC P60208). In DPP6 knockout mice, A-type currents are much less affected by the toxin than in wild-type mice. This chain is Potassium channel toxin alpha-KTx 15.2, found in Olivierus martensii (Manchurian scorpion).